We begin with the raw amino-acid sequence, 198 residues long: MTINLILLSLLAYVIGSIPSGLWIGKIFYKKDIREFGSGNLGATNSFRVLGIKAGSIVTVMDILKGTVATLLPFFFQLNVDHHFWLLTGAFAIIGHSFPLFAGFRGGKAVATSAGVILAYAPLLFVAALVVFLVTLKLSKYVSLSSMIGALAALIISLFMGDWILIVLVACIALFVIWRHRANITRIRNGEEPKIKWM.

A run of 5 helical transmembrane segments spans residues 5 to 25 (LILL…LWIG), 56 to 76 (SIVT…PFFF), 84 to 104 (FWLL…FAGF), 114 to 134 (AGVI…VFLV), and 158 to 178 (LFMG…FVIW).

It belongs to the PlsY family. Probably interacts with PlsX.

The protein resides in the cell membrane. The enzyme catalyses an acyl phosphate + sn-glycerol 3-phosphate = a 1-acyl-sn-glycero-3-phosphate + phosphate. The protein operates within lipid metabolism; phospholipid metabolism. In terms of biological role, catalyzes the transfer of an acyl group from acyl-phosphate (acyl-PO(4)) to glycerol-3-phosphate (G3P) to form lysophosphatidic acid (LPA). This enzyme utilizes acyl-phosphate as fatty acyl donor, but not acyl-CoA or acyl-ACP. This chain is Glycerol-3-phosphate acyltransferase, found in Listeria monocytogenes serovar 1/2a (strain ATCC BAA-679 / EGD-e).